The following is a 331-amino-acid chain: MKQTVYIASPESQQIHVWNLNHEGALTLTQVVDVPGQVQPMVVSPDKRYLYVGVRPEFRVLAYRIAPDDGALTFAAESALPGSPTHISTDHQGQFVFVGSYNAGNVSVTRLEDGLPVGVVDVVEGLDGCHSANISPDNRTLWVPALKQDRICLFTVSDDGHLVAQDPAEVTTVEGAGPRHMVFHPNEQYAYCVNELNSSVDVWELKDPHGNIECVQTLDMMPENFSDTRWAADIHITPDGRHLYACDRTASLITVFSVSEDGSVLSKEGFQPTETQPRGFNVDHSGKYLIAAGQKSHHISVYEIVGEEGLLHEKGRYAVGQGPMWVVVNAH.

Lys-287 carries the post-translational modification N6-acetyllysine.

This sequence belongs to the cycloisomerase 2 family.

It catalyses the reaction 6-phospho-D-glucono-1,5-lactone + H2O = 6-phospho-D-gluconate + H(+). The protein operates within carbohydrate degradation; pentose phosphate pathway; D-ribulose 5-phosphate from D-glucose 6-phosphate (oxidative stage): step 2/3. Functionally, catalyzes the hydrolysis of 6-phosphogluconolactone to 6-phosphogluconate. This chain is 6-phosphogluconolactonase, found in Escherichia coli O6:K15:H31 (strain 536 / UPEC).